Consider the following 72-residue polypeptide: Translation initiation factor IF-1 (72 aa).

Residues 1–72 form the S1-like domain; that stretch reads MSKSDYIELE…TKGRIIFRHK (72 aa).

This sequence belongs to the IF-1 family. In terms of assembly, component of the 30S ribosomal translation pre-initiation complex which assembles on the 30S ribosome in the order IF-2 and IF-3, IF-1 and N-formylmethionyl-tRNA(fMet); mRNA recruitment can occur at any time during PIC assembly.

It is found in the cytoplasm. Functionally, one of the essential components for the initiation of protein synthesis. Stabilizes the binding of IF-2 and IF-3 on the 30S subunit to which N-formylmethionyl-tRNA(fMet) subsequently binds. Helps modulate mRNA selection, yielding the 30S pre-initiation complex (PIC). Upon addition of the 50S ribosomal subunit IF-1, IF-2 and IF-3 are released leaving the mature 70S translation initiation complex. The chain is Translation initiation factor IF-1 from Ruthia magnifica subsp. Calyptogena magnifica.